A 60-amino-acid polypeptide reads, in one-letter code: DNA gyrase inhibitor YacG (60 aa).

Zn(2+)-binding residues include Cys3, Cys6, Cys18, and Cys22. A disordered region spans residues 38–60 (PASSEDEEEPLDQEAETPVAPRH). The span at 41–52 (SEDEEEPLDQEA) shows a compositional bias: acidic residues.

It belongs to the DNA gyrase inhibitor YacG family. In terms of assembly, interacts with GyrB. The cofactor is Zn(2+).

Inhibits all the catalytic activities of DNA gyrase by preventing its interaction with DNA. Acts by binding directly to the C-terminal domain of GyrB, which probably disrupts DNA binding by the gyrase. The chain is DNA gyrase inhibitor YacG from Ruegeria pomeroyi (strain ATCC 700808 / DSM 15171 / DSS-3) (Silicibacter pomeroyi).